Here is a 98-residue protein sequence, read N- to C-terminus: Putative defensin-like protein 233 (98 aa).

Positions 1-28 (MGMWCTTLFMVSCVSICLILSHVQEVEA) are cleaved as a signal peptide. Disulfide bonds link cysteine 35–cysteine 96, cysteine 45–cysteine 70, cysteine 53–cysteine 86, and cysteine 68–cysteine 88.

The protein belongs to the DEFL family. In terms of tissue distribution, expressed at least in stem, root, rosette leaves and flower buds.

The protein localises to the secreted. The polypeptide is Putative defensin-like protein 233 (SCRL22) (Arabidopsis thaliana (Mouse-ear cress)).